The following is a 399-amino-acid chain: Homoserine O-acetyltransferase (399 aa).

The region spanning 63–372 (NAILVCHALT…TDRGHDAFLL (310 aa)) is the AB hydrolase-1 domain. Ser-168 functions as the Nucleophile in the catalytic mechanism. Substrate is bound at residue Arg-238. Residues Asp-334 and His-367 contribute to the active site. Residue Asp-368 coordinates substrate.

The protein belongs to the AB hydrolase superfamily. MetX family. In terms of assembly, homodimer.

Its subcellular location is the cytoplasm. The catalysed reaction is L-homoserine + acetyl-CoA = O-acetyl-L-homoserine + CoA. It functions in the pathway amino-acid biosynthesis; L-methionine biosynthesis via de novo pathway; O-acetyl-L-homoserine from L-homoserine: step 1/1. In terms of biological role, transfers an acetyl group from acetyl-CoA to L-homoserine, forming acetyl-L-homoserine. This Nitrobacter hamburgensis (strain DSM 10229 / NCIMB 13809 / X14) protein is Homoserine O-acetyltransferase.